A 299-amino-acid chain; its full sequence is Cytosolic sulfotransferase 1 (299 aa).

Residue K51 to W56 participates in 3'-phosphoadenylyl sulfate binding. H113 serves as the catalytic Proton acceptor. 3'-phosphoadenylyl sulfate-binding positions include R135, S143, Y199, V233–M238, and R261–G263.

Belongs to the sulfotransferase 1 family. In terms of tissue distribution, expressed in liver.

The protein localises to the cytoplasm. Its activity is regulated as follows. Inhibited by Co(2+), Zn(2+), Cd(2+) and Pb(2+) ions. Inactivated by Hg(2+) and Cu(2+) ions. Its function is as follows. Sulfotransferase that utilizes 3'-phospho-5'-adenylyl sulfate (PAPS) as sulfonate donor to catalyze the sulfate conjugation of a variety of xenobiotic and endogenous compounds, including 2-naphthol, hydroxychlorobiphenyls, dopamine and T3 (triiodo-L-thyronine). The polypeptide is Cytosolic sulfotransferase 1 (Danio rerio (Zebrafish)).